The following is an 85-amino-acid chain: Small ribosomal subunit protein bS16 (85 aa).

Belongs to the bacterial ribosomal protein bS16 family.

This is Small ribosomal subunit protein bS16 from Pseudomonas savastanoi pv. phaseolicola (strain 1448A / Race 6) (Pseudomonas syringae pv. phaseolicola (strain 1448A / Race 6)).